A 299-amino-acid polypeptide reads, in one-letter code: Oxaloacetate decarboxylase (299 aa).

Ser57 is a binding site for substrate. Asp95 contributes to the Mg(2+) binding site. Substrate is bound by residues Arg167 and His243.

The protein belongs to the isocitrate lyase/PEP mutase superfamily. Oxaloacetate decarboxylase family. In terms of assembly, homotetramer; dimer of dimers. The cofactor is Mg(2+).

It carries out the reaction oxaloacetate + H(+) = pyruvate + CO2. Functionally, catalyzes the decarboxylation of oxaloacetate into pyruvate. Seems to play a role in maintaining cellular concentrations of bicarbonate and pyruvate. The chain is Oxaloacetate decarboxylase from Paraburkholderia xenovorans (strain LB400).